Consider the following 232-residue polypeptide: Vesicle transport through interaction with t-SNAREs homolog 1B (232 aa).

The residue at position 2 (Ala2) is an N-acetylalanine. Interaction with CLINT1 stretches follow at residues 2 to 23 (ATSA…GLLE) and 69 to 73 (APLTF). At 2–208 (ATSAASSEHF…SRKVITNKLL (207 aa)) the chain is on the cytoplasmic side. A coiled-coil region spans residues 36-98 (AGTEEKKKLV…AKLHREVRST (63 aa)). The residue at position 103 (Thr103) is a Phosphothreonine. Arg107 carries the omega-N-methylarginine modification. Phosphoserine is present on Ser138. Positions 160 to 201 (GSEIIEELGEQRDQLERTKSRLVNTNENLSKSRKILRSMSRK) form a coiled coil. A helical; Anchor for type IV membrane protein transmembrane segment spans residues 209–229 (LSVIIVLELAILVGLVYYKFF). The Vesicular segment spans residues 230–232 (RHH).

This sequence belongs to the VTI1 family. Forms a SNARE complex with STX7, STX8 and VAMP8 which functions in the homotypic fusion of late endosomes. Component of the SNARE complex composed of STX7, STX8, VAMP7 and VIT1B that is required for heterotypic fusion of late endosomes with lysosomes. May interact with STX17. Interacts with CLINT1.

It is found in the early endosome membrane. The protein resides in the late endosome membrane. It localises to the lysosome membrane. The protein localises to the cytoplasmic granule. Its subcellular location is the recycling endosome membrane. Functionally, V-SNARE that mediates vesicle transport pathways through interactions with t-SNAREs on the target membrane. These interactions are proposed to mediate aspects of the specificity of vesicle trafficking and to promote fusion of the lipid bilayers. The chain is Vesicle transport through interaction with t-SNAREs homolog 1B (Vti1b) from Rattus norvegicus (Rat).